We begin with the raw amino-acid sequence, 152 residues long: Ribosomal RNA large subunit methyltransferase H (152 aa).

S-adenosyl-L-methionine-binding positions include L68, G100, and 119 to 124 (FGRMTW).

Belongs to the RNA methyltransferase RlmH family. As to quaternary structure, homodimer.

It localises to the cytoplasm. It catalyses the reaction pseudouridine(1915) in 23S rRNA + S-adenosyl-L-methionine = N(3)-methylpseudouridine(1915) in 23S rRNA + S-adenosyl-L-homocysteine + H(+). Its function is as follows. Specifically methylates the pseudouridine at position 1915 (m3Psi1915) in 23S rRNA. This chain is Ribosomal RNA large subunit methyltransferase H, found in Paramagnetospirillum magneticum (strain ATCC 700264 / AMB-1) (Magnetospirillum magneticum).